Reading from the N-terminus, the 81-residue chain is Small ribosomal subunit protein bS16 (81 aa).

The protein belongs to the bacterial ribosomal protein bS16 family.

The chain is Small ribosomal subunit protein bS16 from Phytoplasma mali (strain AT).